A 960-amino-acid polypeptide reads, in one-letter code: MKIPNIGNVMNKFEILGVVGEGAYGVVLKCRHKETHEIVAIKKFKDSEENEEVKETTLRELKMLRTLKQENIVELKEAFRRRGKLYLVFEYVEKNMLELLEEMPNGVPPEKVKSYIYQLIKAIHWCHKNDIVHRDIKPENLLISHNDVLKLCDFGFARNLSEGNNANYTEYVATRWYRSPELLLGAPYGKSVDMWSVGCILGELSDGQPLFPGESEIDQLFTIQKVLGPLPSEQMKLFYSNPRFHGLRFPAVNHPQSLERRYLGILNSVLLDLMKNLLKLDPADRYLTEQCLNHPTFQTQRLLDRSPSRSAKRKPYHVESSTLSNRNQAGKSTALQSHHRSNSKDIQNLSVGLPRADEGLPANESFLNGNLAGASLSPLHTKTYQASSQPGSTSKDLTNNNIPHLLSPKEAKSKTEFDFNIDPKPSEGPGTKYLKSNSRSQQNRHSFMESSQSKAGTLQPNEKQSRHSYIDTIPQSSRSPSYRTKAKSHGALSDSKSVSNLSEARAQIAEPSTSRYFPSSCLDLNSPTSPTPTRHSDTRTLLSPSGRNNRNEGTLDSRRTTTRHSKTMEELKLPEHMDSSHSHSLSAPHESFSYGLGYTSPFSSQQRPHRHSMYVTRDKVRAKGLDGSLSIGQGMAARANSLQLLSPQPGEQLPPEMTVARSSVKETSREGTSSFHTRQKSEGGVYHDPHSDDGTAPKENRHLYNDPVPRRVGSFYRVPSPRPDNSFHENNVSTRVSSLPSESSSGTNHSKRQPAFDPWKSPENISHSEQLKEKEKQGFFRSMKKKKKKSQTVPNSDSPDLLTLQKSIHSASTPSSRPKEWRPEKISDLQTQSQPLKSLRKLLHLSSASNHPASSDPRFQPLTAQQTKNSFSEIRIHPLSQASGGSSNIRQEPAPKGRPALQLPGQMDPGWHVSSVTRSATEGPSYSEQLGAKSGPNGHPYNRTNRSRMPNLNDLKETAL.

The 285-residue stretch at phenylalanine 13–phenylalanine 297 folds into the Protein kinase domain. ATP is bound by residues valine 19–valine 27 and lysine 42. Aspartate 135 (proton acceptor) is an active-site residue. Disordered stretches follow at residues glutamine 300 to leucine 349, lysine 382 to lysine 566, serine 646 to glutamine 834, and alanine 848 to leucine 960. Composition is skewed to polar residues over residues glutamate 319–glutamine 336 and lysine 382–isoleucine 402. Serine 407 is modified (phosphoserine). A compositionally biased stretch (basic and acidic residues) spans serine 407–phenylalanine 417. 3 stretches are compositionally biased toward polar residues: residues leucine 434–glutamate 462, isoleucine 473–tyrosine 482, and glutamate 510–asparagine 548. Phosphoserine is present on serine 479. 2 stretches are compositionally biased toward basic and acidic residues: residues asparagine 549–arginine 559 and glutamine 679–tyrosine 704. Serine 720 carries the post-translational modification Phosphoserine. Residues histidine 728–asparagine 748 show a composition bias toward polar residues. Serine 761 bears the Phosphoserine mark. A compositionally biased stretch (basic and acidic residues) spans glutamate 769–glycine 778. Polar residues predominate over residues glutamine 791–serine 816. Basic and acidic residues predominate over residues arginine 817–serine 827. Polar residues-rich tracts occupy residues leucine 862–serine 872, serine 880–arginine 890, and serine 914–glutamate 928.

It belongs to the protein kinase superfamily. CMGC Ser/Thr protein kinase family. CDC2/CDKX subfamily. In terms of assembly, interacts with MECP2. Autophosphorylated. As to expression, expressed in brain, lung, kidney, prostate, ovary, placenta, pancreas and testis. Predominant transcript in brain.

Its subcellular location is the nucleus. It localises to the cytoplasm. The protein resides in the cytoskeleton. It is found in the cilium basal body. The protein localises to the microtubule organizing center. Its subcellular location is the centrosome. The catalysed reaction is L-seryl-[protein] + ATP = O-phospho-L-seryl-[protein] + ADP + H(+). It catalyses the reaction L-threonyl-[protein] + ATP = O-phospho-L-threonyl-[protein] + ADP + H(+). In terms of biological role, mediates phosphorylation of MECP2. May regulate ciliogenesis. The sequence is that of Cyclin-dependent kinase-like 5 from Homo sapiens (Human).